Reading from the N-terminus, the 469-residue chain is Cytochrome P450 85A1 (469 aa).

The helical transmembrane segment at 1-21 threads the bilayer; sequence MVLVAIGVVVAAAVVVSSLLL. C419 serves as a coordination point for heme.

The protein belongs to the cytochrome P450 family. Heme is required as a cofactor. In terms of tissue distribution, expressed at low levels in all the tissues, but preferentially in the leaf sheath.

The protein localises to the membrane. It carries out the reaction 6-deoxoteasterone + reduced [NADPH--hemoprotein reductase] + O2 = 6alpha-hydroxyteasterone + oxidized [NADPH--hemoprotein reductase] + H2O + H(+). The catalysed reaction is 6alpha-hydroxytyphasterol + reduced [NADPH--hemoprotein reductase] + O2 = teasterone + oxidized [NADPH--hemoprotein reductase] + 2 H2O + H(+). It catalyses the reaction 3-dehydro-6-deoxoteasterone + reduced [NADPH--hemoprotein reductase] + O2 = 3-dehydro-6alpha-hydroxyteasterone + oxidized [NADPH--hemoprotein reductase] + H2O + H(+). The enzyme catalyses 3-dehydro-6alpha-hydroxyteasterone + reduced [NADPH--hemoprotein reductase] + O2 = 3-dehydroteasterone + oxidized [NADPH--hemoprotein reductase] + 2 H2O + H(+). It carries out the reaction 6-deoxotyphasterol + reduced [NADPH--hemoprotein reductase] + O2 = 6alpha-hydroxytyphasterol + oxidized [NADPH--hemoprotein reductase] + H2O + H(+). The catalysed reaction is 6alpha-hydroxytyphasterol + reduced [NADPH--hemoprotein reductase] + O2 = typhasterol + oxidized [NADPH--hemoprotein reductase] + 2 H2O + H(+). It catalyses the reaction 3-dehydro-6-deoxoteasterone + 2 reduced [NADPH--hemoprotein reductase] + 2 O2 = 3-dehydroteasterone + 2 oxidized [NADPH--hemoprotein reductase] + 3 H2O + 2 H(+). The enzyme catalyses 6-deoxoteasterone + 2 reduced [NADPH--hemoprotein reductase] + 2 O2 = teasterone + 2 oxidized [NADPH--hemoprotein reductase] + 3 H2O + 2 H(+). It carries out the reaction 6-deoxotyphasterol + 2 reduced [NADPH--hemoprotein reductase] + 2 O2 = typhasterol + 2 oxidized [NADPH--hemoprotein reductase] + 3 H2O + 2 H(+). Its pathway is plant hormone biosynthesis; brassinosteroid biosynthesis. Functionally, catalyzes the C6-oxidation step in brassinosteroids biosynthesis. May convert 6-deoxoteasterone (6-deoxoTE) to teasterone (TE), 3-dehydro-6-deoxoteasterone (6-deoxo3DT, 6-deoxo3DHT) to 3-dehydroteasterone (3DT, 3-DHT), and 6-deoxotyphasterol (6-deoxoTY) to typhasterol (TY). Involved in the organization and elongation of the leaf and stem cells. Not able to convert 6-deoxocastasterone (6-deoxoCS) and castasterone (CS) to brassinolide (BL). This is Cytochrome P450 85A1 from Oryza sativa subsp. japonica (Rice).